The sequence spans 102 residues: Small ribosomal subunit protein uS10m (102 aa).

Belongs to the universal ribosomal protein uS10 family.

It localises to the mitochondrion. In Marchantia polymorpha (Common liverwort), this protein is Small ribosomal subunit protein uS10m (RPS10).